Here is a 131-residue protein sequence, read N- to C-terminus: DNA-binding protein inhibitor ID-4 (131 aa).

Positions 36 to 88 (ARYKMEEEETLCLQYDMNDCYSRLKRLVPTIPPNKKVSKVEILQHVIDYILDL) constitute a bHLH domain.

Heterodimer with other HLH proteins. As to expression, during embryonic development, expressed in a number of neural tissues, including Rohon-Beard neurons, olfactory placode, eye primordia, and the trigeminal ganglia. Also expressed in other organs including the pronephros and liver primordium. Pronephric development begins by stage 25 and increases during tailbud stages. Expressed in both the tubules and the duct. As embryogenesis progresses, expressed in the migrating melanocytes and lateral line structures.

It localises to the nucleus. Transcriptional regulator (lacking a basic DNA binding domain) which negatively regulates the basic helix-loop-helix (bHLH) transcription factors by forming heterodimers and inhibiting their DNA binding and transcriptional activity. Inhibits the activity of both neurogenic (neurog1/neurogenin, neurod1/neuroD) and myogenic (myod1/myoD) bHLH factors. The chain is DNA-binding protein inhibitor ID-4 from Xenopus laevis (African clawed frog).